The sequence spans 227 residues: MKFAVIVFPGSNCDVDMFHAIKDELGEEVDYVWHDTENLDEYDAILLPGGFSYGDYLRCGAISRFANAMKAVQKAAEQGKPILGVCNGFQILVESGLLPGALMRNENLKFMCRTVQLRVENNETMFTSQYEKDEVINIPIAHGEGNYYCDEETLKKLEENNQIAFRYVENPNGSVSDIAGIVNEKGNVLGMMPHPERAVDELLGGAEGLKVFQSILKQWRETYVVNA.

The Glutamine amidotransferase type-1 domain occupies 3 to 225 (FAVIVFPGSN…LKQWRETYVV (223 aa)). Catalysis depends on C86, which acts as the Nucleophile. Active-site residues include H194 and E196.

In terms of assembly, part of the FGAM synthase complex composed of 1 PurL, 1 PurQ and 2 PurS subunits.

It localises to the cytoplasm. It catalyses the reaction N(2)-formyl-N(1)-(5-phospho-beta-D-ribosyl)glycinamide + L-glutamine + ATP + H2O = 2-formamido-N(1)-(5-O-phospho-beta-D-ribosyl)acetamidine + L-glutamate + ADP + phosphate + H(+). The catalysed reaction is L-glutamine + H2O = L-glutamate + NH4(+). It functions in the pathway purine metabolism; IMP biosynthesis via de novo pathway; 5-amino-1-(5-phospho-D-ribosyl)imidazole from N(2)-formyl-N(1)-(5-phospho-D-ribosyl)glycinamide: step 1/2. Part of the phosphoribosylformylglycinamidine synthase complex involved in the purines biosynthetic pathway. Catalyzes the ATP-dependent conversion of formylglycinamide ribonucleotide (FGAR) and glutamine to yield formylglycinamidine ribonucleotide (FGAM) and glutamate. The FGAM synthase complex is composed of three subunits. PurQ produces an ammonia molecule by converting glutamine to glutamate. PurL transfers the ammonia molecule to FGAR to form FGAM in an ATP-dependent manner. PurS interacts with PurQ and PurL and is thought to assist in the transfer of the ammonia molecule from PurQ to PurL. This is Phosphoribosylformylglycinamidine synthase subunit PurQ from Bacillus cereus (strain Q1).